We begin with the raw amino-acid sequence, 121 residues long: Ribonuclease P protein component (121 aa).

This sequence belongs to the RnpA family. As to quaternary structure, consists of a catalytic RNA component (M1 or rnpB) and a protein subunit.

It catalyses the reaction Endonucleolytic cleavage of RNA, removing 5'-extranucleotides from tRNA precursor.. Its function is as follows. RNaseP catalyzes the removal of the 5'-leader sequence from pre-tRNA to produce the mature 5'-terminus. It can also cleave other RNA substrates such as 4.5S RNA. The protein component plays an auxiliary but essential role in vivo by binding to the 5'-leader sequence and broadening the substrate specificity of the ribozyme. The chain is Ribonuclease P protein component from Neisseria gonorrhoeae (strain ATCC 700825 / FA 1090).